A 519-amino-acid polypeptide reads, in one-letter code: ATP synthase subunit alpha 1 (519 aa).

An ATP-binding site is contributed by 172–179 (GDRQTGKT).

Belongs to the ATPase alpha/beta chains family. In terms of assembly, F-type ATPases have 2 components, CF(1) - the catalytic core - and CF(0) - the membrane proton channel. CF(1) has five subunits: alpha(3), beta(3), gamma(1), delta(1), epsilon(1). CF(0) has three main subunits: a(1), b(2) and c(9-12). The alpha and beta chains form an alternating ring which encloses part of the gamma chain. CF(1) is attached to CF(0) by a central stalk formed by the gamma and epsilon chains, while a peripheral stalk is formed by the delta and b chains.

The protein localises to the cell inner membrane. It catalyses the reaction ATP + H2O + 4 H(+)(in) = ADP + phosphate + 5 H(+)(out). Produces ATP from ADP in the presence of a proton gradient across the membrane. The alpha chain is a regulatory subunit. The chain is ATP synthase subunit alpha 1 from Psychromonas ingrahamii (strain DSM 17664 / CCUG 51855 / 37).